Here is a 60-residue protein sequence, read N- to C-terminus: Large ribosomal subunit protein bL32 (60 aa).

It belongs to the bacterial ribosomal protein bL32 family.

The protein is Large ribosomal subunit protein bL32 of Hydrogenobaculum sp. (strain Y04AAS1).